The primary structure comprises 99 residues: DNA-directed RNA polymerase subunit omega (99 aa).

Belongs to the RNA polymerase subunit omega family. In terms of assembly, the RNAP catalytic core consists of 2 alpha, 1 beta, 1 beta' and 1 omega subunit. When a sigma factor is associated with the core the holoenzyme is formed, which can initiate transcription.

The catalysed reaction is RNA(n) + a ribonucleoside 5'-triphosphate = RNA(n+1) + diphosphate. Functionally, promotes RNA polymerase assembly. Latches the N- and C-terminal regions of the beta' subunit thereby facilitating its interaction with the beta and alpha subunits. This chain is DNA-directed RNA polymerase subunit omega, found in Deinococcus geothermalis (strain DSM 11300 / CIP 105573 / AG-3a).